Here is a 136-residue protein sequence, read N- to C-terminus: Large ribosomal subunit protein uL16 (136 aa).

A compositionally biased stretch (basic residues) spans Met-1–Asn-17. The tract at residues Met-1 to Ala-21 is disordered.

It belongs to the universal ribosomal protein uL16 family. In terms of assembly, part of the 50S ribosomal subunit.

Binds 23S rRNA and is also seen to make contacts with the A and possibly P site tRNAs. This Buchnera aphidicola subsp. Acyrthosiphon kondoi (Acyrthosiphon kondoi symbiotic bacterium) protein is Large ribosomal subunit protein uL16.